The chain runs to 1165 residues: MNAPRYAEIGVTTNFSFLEGGSHPQDYVHQASRLGLDAIGIADRNTLAGVVRAYSELDNEELAYKPKLLIGARLCFVDGTPDVLAYPTDRAAYGRLCRLLSAGKLRAGKGECHLTFADLEAFVSSNAARPFPSSWPGLTRPSTSLQPRVLQDVDARDKPGHDGGKREIGRSQILFVLMPPYRFQAKAITAALERLTALNSGNVWLALAPYYRGDDKRRLARLRRIAAAADVPGIATNDVLYHHPSRRALQDVLTCVRDKTTIDKAGRRLEGNAERHLKPAAEMARLFRADLDAVAETLRFADRISFTLDELKYHYPDEPVPPGKTAQQHLEDLTREGIATYFPNGISDRLRATIAKELTLIAKRDYAHYFLTVHDIVRYARSQNILCQGRGSAANSAVCYVLGITCVDPTEIDLLFERFVSEERDEPPDIDVDFEHSRREEVMQYIYRRYGRHRAAIVSTVIHYRPRSAIRDVGKALGLSEDVTAALADTVWGSWGKGLSEMQVRQAGLDPTNPMIGRAVELATELIGFPRHLSQHVGGYVLTQDRLDSYVPIGNAAMADRTFIEWDKDDIDAVKMMKVDVLALGMLTCIRKGFDLIAQHKGVRFQLSDIKSEDDNNVYQMLQRGESIGVFQVESRAQMNMLPRLKPRCFYDLVIEVAIVRPGPIQGDMVHPYLRRRNGQEPVVYPSPSGEAGDKNELQQILGKTLGVPLFQEQAMRIAIEAAHFTPDEANQLRRAMATFRNVGTIGKFESKMIGNLMARGYDATFAKNCFEQIKGFGSYGFPESHAASFAKLVYVSAWMKCEHPDAFCCALLNSQPMGFYAPAQIVGDARANKVEVRPVDVSFSDGQCTLEERCGAYHAVRLGFRQIDGFRWADPDEERVRLEAGLPPSDDWAARIVAARARGPFGSLEQFARITALPKRALILLADADAFRSLGLDRRAALWAVRRLPDDVPLPLFEAASAREQQDEQAAPLPQMPMAEHVVADYQTVRLSLKGHPLEFLRAVFATERVVTCREVSETRRNGRRVRCAGVVLVRQRPGSASGVIFMTIEDETGIANIVVWPSVMEKFRKEVMGARLILVEGKIQASPEGVVHLVAERLVDRSSEMGRLSEGLARPPLPTGADLYEPLTYEPLNGDRRDNPDAPAQRLRHPRDVRILPPSRDFH.

The segment at 1111 to 1165 (SEGLARPPLPTGADLYEPLTYEPLNGDRRDNPDAPAQRLRHPRDVRILPPSRDFH) is disordered. Residues 1152 to 1165 (PRDVRILPPSRDFH) are compositionally biased toward basic and acidic residues.

The protein belongs to the DNA polymerase type-C family. DnaE2 subfamily.

It is found in the cytoplasm. It catalyses the reaction DNA(n) + a 2'-deoxyribonucleoside 5'-triphosphate = DNA(n+1) + diphosphate. DNA polymerase involved in damage-induced mutagenesis and translesion synthesis (TLS). It is not the major replicative DNA polymerase. The sequence is that of Error-prone DNA polymerase from Rhodopseudomonas palustris (strain HaA2).